A 160-amino-acid chain; its full sequence is Large ribosomal subunit protein uL15 (160 aa).

Residues 1–11 (MKLNELRDNHG) are compositionally biased toward basic and acidic residues. The disordered stretch occupies residues 1–39 (MKLNELRDNHGARPKSKRLGRGIGSGKGKTSGKGVKGQK). The segment covering 21–35 (RGIGSGKGKTSGKGV) has biased composition (gly residues).

Belongs to the universal ribosomal protein uL15 family. Part of the 50S ribosomal subunit.

Binds to the 23S rRNA. The polypeptide is Large ribosomal subunit protein uL15 (Granulibacter bethesdensis (strain ATCC BAA-1260 / CGDNIH1)).